A 421-amino-acid chain; its full sequence is UDP-N-acetylglucosamine 1-carboxyvinyltransferase (421 aa).

Lys-22 to Asn-23 lines the phosphoenolpyruvate pocket. A UDP-N-acetyl-alpha-D-glucosamine-binding site is contributed by Arg-93. The active-site Proton donor is Cys-117. A 2-(S-cysteinyl)pyruvic acid O-phosphothioketal modification is found at Cys-117. UDP-N-acetyl-alpha-D-glucosamine contacts are provided by residues Arg-122–Gln-126, Asp-309, and Ile-331.

Belongs to the EPSP synthase family. MurA subfamily.

The protein resides in the cytoplasm. The enzyme catalyses phosphoenolpyruvate + UDP-N-acetyl-alpha-D-glucosamine = UDP-N-acetyl-3-O-(1-carboxyvinyl)-alpha-D-glucosamine + phosphate. The protein operates within cell wall biogenesis; peptidoglycan biosynthesis. Functionally, cell wall formation. Adds enolpyruvyl to UDP-N-acetylglucosamine. The polypeptide is UDP-N-acetylglucosamine 1-carboxyvinyltransferase (Albidiferax ferrireducens (strain ATCC BAA-621 / DSM 15236 / T118) (Rhodoferax ferrireducens)).